Here is a 476-residue protein sequence, read N- to C-terminus: Argininosuccinate lyase (476 aa).

Belongs to the lyase 1 family. Argininosuccinate lyase subfamily.

Its subcellular location is the cytoplasm. The catalysed reaction is 2-(N(omega)-L-arginino)succinate = fumarate + L-arginine. It functions in the pathway amino-acid biosynthesis; L-arginine biosynthesis; L-arginine from L-ornithine and carbamoyl phosphate: step 3/3. The polypeptide is Argininosuccinate lyase (Thermobifida fusca (strain YX)).